A 205-amino-acid chain; its full sequence is Proteasome subunit beta type-3 (205 aa).

Ser2 carries the post-translational modification N-acetylserine. Lys77 carries the post-translational modification N6-acetyllysine.

The protein belongs to the peptidase T1B family. As to quaternary structure, the 26S proteasome consists of a 20S proteasome core and two 19S regulatory subunits. The 20S proteasome core is a barrel-shaped complex made of 28 subunits that are arranged in four stacked rings. The two outer rings are each formed by seven alpha subunits, and the two inner rings are formed by seven beta subunits. The proteolytic activity is exerted by three beta-subunits PSMB5, PSMB6 and PSMB7. In terms of tissue distribution, detected in liver (at protein level).

It is found in the cytoplasm. The protein resides in the nucleus. Functionally, non-catalytic component of the 20S core proteasome complex involved in the proteolytic degradation of most intracellular proteins. This complex plays numerous essential roles within the cell by associating with different regulatory particles. Associated with two 19S regulatory particles, forms the 26S proteasome and thus participates in the ATP-dependent degradation of ubiquitinated proteins. The 26S proteasome plays a key role in the maintenance of protein homeostasis by removing misfolded or damaged proteins that could impair cellular functions, and by removing proteins whose functions are no longer required. Associated with the PA200 or PA28, the 20S proteasome mediates ubiquitin-independent protein degradation. This type of proteolysis is required in several pathways including spermatogenesis (20S-PA200 complex) or generation of a subset of MHC class I-presented antigenic peptides (20S-PA28 complex). The sequence is that of Proteasome subunit beta type-3 (Psmb3) from Mus musculus (Mouse).